The primary structure comprises 264 residues: Transmembrane protein 41A (264 aa).

The signal sequence occupies residues 1–17 (MRALLGLLLVFGGCTFA). A run of 5 helical transmembrane segments spans residues 67–87 (AYVFLLFCSAYLYKQGFAIPG), 100–122 (GPWLGLLLCCVLTSVGATGCYLL), 153–173 (LFFFLLFLRLFPMTPNWFLNL), 175–195 (APILNIPIVQFFFSVLIGLIP), and 219–239 (WETVLKLLAIALVALVPGTLI). The interval 96 to 207 (GALFGPWLGL…FICVQTGSIL (112 aa)) is VTT domain.

It belongs to the TMEM41 family.

The protein resides in the membrane. The chain is Transmembrane protein 41A (Tmem41a) from Mus musculus (Mouse).